A 786-amino-acid polypeptide reads, in one-letter code: Endonuclease MutS2 (786 aa).

An ATP-binding site is contributed by 332–339; it reads GPNTGGKT. A Smr domain is found at 711–786; it reads IDLRGMDSEE…GTGVTVVILK (76 aa).

The protein belongs to the DNA mismatch repair MutS family. MutS2 subfamily. In terms of assembly, homodimer. Binds to stalled ribosomes, contacting rRNA.

Endonuclease that is involved in the suppression of homologous recombination and thus may have a key role in the control of bacterial genetic diversity. Its function is as follows. Acts as a ribosome collision sensor, splitting the ribosome into its 2 subunits. Detects stalled/collided 70S ribosomes which it binds and splits by an ATP-hydrolysis driven conformational change. Acts upstream of the ribosome quality control system (RQC), a ribosome-associated complex that mediates the extraction of incompletely synthesized nascent chains from stalled ribosomes and their subsequent degradation. Probably generates substrates for RQC. This Clostridium perfringens (strain ATCC 13124 / DSM 756 / JCM 1290 / NCIMB 6125 / NCTC 8237 / Type A) protein is Endonuclease MutS2.